The chain runs to 199 residues: NADH-quinone oxidoreductase subunit C (199 aa).

It belongs to the complex I 30 kDa subunit family. NDH-1 is composed of 14 different subunits. Subunits NuoB, C, D, E, F, and G constitute the peripheral sector of the complex.

The protein resides in the cell inner membrane. The enzyme catalyses a quinone + NADH + 5 H(+)(in) = a quinol + NAD(+) + 4 H(+)(out). NDH-1 shuttles electrons from NADH, via FMN and iron-sulfur (Fe-S) centers, to quinones in the respiratory chain. The immediate electron acceptor for the enzyme in this species is believed to be ubiquinone. Couples the redox reaction to proton translocation (for every two electrons transferred, four hydrogen ions are translocated across the cytoplasmic membrane), and thus conserves the redox energy in a proton gradient. The chain is NADH-quinone oxidoreductase subunit C from Cupriavidus pinatubonensis (strain JMP 134 / LMG 1197) (Cupriavidus necator (strain JMP 134)).